The sequence spans 320 residues: Cytochrome f (320 aa).

A signal peptide spans 1 to 35 (MQTRNAFSYIKEEITRSISVLLVIYIIIRAPISNA). Residues tyrosine 36, cysteine 56, cysteine 59, and histidine 60 each coordinate heme. A helical transmembrane segment spans residues 286-305 (VQGLLFFLASIIFAQIFLVL).

Belongs to the cytochrome f family. The 4 large subunits of the cytochrome b6-f complex are cytochrome b6, subunit IV (17 kDa polypeptide, petD), cytochrome f and the Rieske protein, while the 4 small subunits are PetG, PetL, PetM and PetN. The complex functions as a dimer. Heme serves as cofactor.

The protein resides in the plastid. Its subcellular location is the chloroplast thylakoid membrane. Its function is as follows. Component of the cytochrome b6-f complex, which mediates electron transfer between photosystem II (PSII) and photosystem I (PSI), cyclic electron flow around PSI, and state transitions. In Lotus japonicus (Lotus corniculatus var. japonicus), this protein is Cytochrome f.